Consider the following 361-residue polypeptide: CRISPR system associated protein Cas8 (361 aa).

Monomer. Can form a Cascade complex with Csa5, Cas7, Cas5a, Cas3 and Cas3'.

Its function is as follows. CRISPR (clustered regularly interspaced short palindromic repeat) is an adaptive immune system that provides protection against mobile genetic elements (viruses, transposable elements and conjugative plasmids). CRISPR clusters contain sequences complementary to antecedent mobile elements and target invading nucleic acids. CRISPR clusters are transcribed and processed into CRISPR RNA (crRNA). This chain is CRISPR system associated protein Cas8 (cas8a2), found in Thermoproteus tenax (strain ATCC 35583 / DSM 2078 / JCM 9277 / NBRC 100435 / Kra 1).